We begin with the raw amino-acid sequence, 196 residues long: MKPQDIVAGKSSLWIFGYGSLVWKPDFKYKRSKVGYIKGYKRRFWHGDNFHRGDDEMPGRVVTLIEEDDVCTWGVAFEVTGSQMEESLKYLNVREAVRGGYLTRAVDFFPRGTNQPPVQALVYIATPDNPIYLGPASTEEIASQIAVCKGNSGHNIEYLLRLAEFMRVSCPDVDDPHLFSIEAALLATIRPILLAA.

15 to 20 lines the substrate pocket; sequence IFGYGS. The active-site Proton acceptor is Glu95.

This sequence belongs to the gamma-glutamylcyclotransferase family. ChaC subfamily.

It is found in the cytoplasm. Its subcellular location is the cytosol. It localises to the golgi apparatus. The protein localises to the trans-Golgi network. It carries out the reaction glutathione = L-cysteinylglycine + 5-oxo-L-proline. Its function is as follows. Catalyzes the cleavage of glutathione into 5-oxo-L-proline and a Cys-Gly dipeptide. Acts specifically on glutathione, but not on other gamma-glutamyl peptides. Glutathione depletion is an important factor for apoptosis initiation and execution. Acts as a pro-apoptotic component of the unfolded protein response pathway by mediating the pro-apoptotic effects of the ATF4-ATF3-DDIT3/CHOP cascade. Negative regulator of Notch signaling pathway involved in embryonic neurogenesis: acts by inhibiting Notch cleavage by furin, maintaining Notch in an immature inactive form, thereby promoting neurogenesis in embryos. The chain is Glutathione-specific gamma-glutamylcyclotransferase 1 from Danio rerio (Zebrafish).